A 1166-amino-acid polypeptide reads, in one-letter code: MPGITETSQVTGPVLAHVIVTEDPYDASERAFLSTDLYELLFEDYANGSKSGLTLISIQLMGSSLFNEFQTFKVYESEEQLPPNTVNLCNMGNIIDYSSDFTVDSGYVARVDSLVKLDTVIISVLPEVYSLASQASQHQLVDILGGNDQHTVIRQGDYNKDINGKISLCEPTDQGFLESTTKIIVVKENSLNLPLLDQSQDGSLNYEENVKMNLEHSISNYFSLNSLDPENQITTTGVEFSVKCLDSPISVRKTAKSISVAHDSEDESSPKLVEEDISNEDTLLYAFCKTTELAKIGCLSGDIVKMKSGQCQCTTFECNCESCPVQYRYIRIHAFTDPNTYEKGCIYLNPILSFNLNNPKIVKLCPISIPDKRFELQGFHFSKFIPLAKQVTIARVSSPVTLDRTLQTLFLTNLKTYFESGRKVLSKDQLIPIPVDTLLAKSIFSTYEKLGVDDSQFPTVIPEGKPDAIAWFKVTEVSGELADSASQQFIIDPLKTKMMQSGVVSCSPPKNSQHCNWANYLGCGQMFSFPNVSGVTTSTFEYAKTLRKLIKATIDPSRLVNLQTTVLLSSLSRAIGKSLLVHSLALECGVHLVEIDGYEVLNPSSESKTIGTIRGKLDRVVEGCTPLIVFIKHIEALTKKSEQQQKDSLAVKINELIDEYTAKPGVLFVASTNDSDNLSDELRAKFKFEIVLGVPSEQERTLIFKYLIDFDQKTTPKVTEGTRELSFAPRNDLSLSSLSLQSAGLTPRDLISIVENAKTLAVDRVESLAKHHNVSFENMVYSSGGYIKFTPEDVEKSINTARNKFSDSIGAPRIPNVKWEDVGGLDVVKDEILDTIDMPMKHPELFSNGIKKRSGILFYGPPGTGKTLLAKAIATNFALNFFSVKGPELLNMYIGESEANVRKVFQRARDAKPCVVFFDELDSVAPKRGNQGDSGGVMDRIVSQLLAELDGMSGGDGGDGVFVVGATNRPDLLDEALLRPGRFDKMLYLGVSDTHEKQSKIMEALSRKFHLHPSVDLDKVAESCPFTFTGADFYALCSDAMLNAMTRIANTVDEKIKRYNEELPEKSQVSTRWWFDNVATKEDIDVLVTLEDFDKSRKELVPSVSAEELDHYLRVRQNFEGGKEKKVVQENGQTEHFSNGSANNHITFGDEQVVEAIDENGNSIIA.

This sequence belongs to the AAA ATPase family. As to quaternary structure, interacts with PEX1; forming the PEX1-PEX6 AAA ATPase complex, which is composed of a heterohexamer formed by a trimer of PEX1-PEX6 dimers.

Its subcellular location is the membrane. It catalyses the reaction ATP + H2O = ADP + phosphate + H(+). Component of the PEX1-PEX6 AAA ATPase complex involved in peroxisome biosynthesis. The complex acts as a protein dislocase complex that mediates the ATP-dependent extraction of the PEX5 receptor from peroxisomal membranes, an essential step for PEX5 recycling. Specifically recognizes PEX5 monoubiquitinated at 'Cys-6', and pulls it out of the peroxisome lumen through the PEX2-PEX10-PEX12 retrotranslocation channel. Extraction by the PEX1-PEX6 AAA ATPase complex is accompanied by unfolding of the TPR repeats and release of bound cargo from PEX5. The protein is Peroxisomal ATPase PEX6 of Komagataella phaffii (strain GS115 / ATCC 20864) (Yeast).